A 295-amino-acid polypeptide reads, in one-letter code: Pyridoxal 5'-phosphate synthase subunit PdxS (295 aa).

D-ribose 5-phosphate is bound at residue Asp-25. The active-site Schiff-base intermediate with D-ribose 5-phosphate is the Lys-82. A D-ribose 5-phosphate-binding site is contributed by Gly-154. Arg-166 contributes to the D-glyceraldehyde 3-phosphate binding site. D-ribose 5-phosphate-binding positions include Gly-215 and 236–237; that span reads GS.

This sequence belongs to the PdxS/SNZ family. In the presence of PdxT, forms a dodecamer of heterodimers.

The catalysed reaction is aldehydo-D-ribose 5-phosphate + D-glyceraldehyde 3-phosphate + L-glutamine = pyridoxal 5'-phosphate + L-glutamate + phosphate + 3 H2O + H(+). The protein operates within cofactor biosynthesis; pyridoxal 5'-phosphate biosynthesis. Functionally, catalyzes the formation of pyridoxal 5'-phosphate from ribose 5-phosphate (RBP), glyceraldehyde 3-phosphate (G3P) and ammonia. The ammonia is provided by the PdxT subunit. Can also use ribulose 5-phosphate and dihydroxyacetone phosphate as substrates, resulting from enzyme-catalyzed isomerization of RBP and G3P, respectively. This Listeria welshimeri serovar 6b (strain ATCC 35897 / DSM 20650 / CCUG 15529 / CIP 8149 / NCTC 11857 / SLCC 5334 / V8) protein is Pyridoxal 5'-phosphate synthase subunit PdxS.